Here is a 484-residue protein sequence, read N- to C-terminus: MHIAFAASECVPFSKTGGLADVVGAVPRALAALGHKVSVYTPLYRNTKLENPKTAVRSITVPFDDQYRFCSIVDGGMIDGVQFYFVDYPAYFDRDALYGTPIGDYHDNAERFALFSRAVIEGSKILGVPDIFHCHDWQSALIPVLLRTLYAEDPAFDHAKIVFTIHNMGYQGLFPGEILPLLMLPWDLFTLTKMEFYGKVNFLKGALVYADFVTTVSRRYALEIQTAEYGFGLEGVLRGRSGTVAGILNGVDYSEWSPETDRFIAAKFSADSLAAKAQDKADLLREFGLPETKLPVVGIVSRFAAQKGFDLIQQVGDRLAREEAIFVVLGSGDKTYEDLMRRLSKQYPNRFAVRVAYDNALAHKIEAGSDMFLMPSRYEPCGLNQIYSLRYGTVPIVRATGGLDDTIENWDPITNRGTGFKFVEYSGEDMLDTVRKALELFKDKTAWQKLMRNGMARDFSWNTAAKEYVRVYEKAKQVRAPMPV.

ADP-alpha-D-glucose is bound at residue Lys15.

This sequence belongs to the glycosyltransferase 1 family. Bacterial/plant glycogen synthase subfamily.

The enzyme catalyses [(1-&gt;4)-alpha-D-glucosyl](n) + ADP-alpha-D-glucose = [(1-&gt;4)-alpha-D-glucosyl](n+1) + ADP + H(+). The protein operates within glycan biosynthesis; glycogen biosynthesis. Functionally, synthesizes alpha-1,4-glucan chains using ADP-glucose. This chain is Glycogen synthase, found in Koribacter versatilis (strain Ellin345).